Reading from the N-terminus, the 162-residue chain is MAAEPGGWLGPALGLRLLLATALQMVSAFGAEFSSESCRELGFSSNLLCGSCDLLGQFDLLQLDPDCRGCCQEEAQFETKKLYAGAILEVCGUKLGRFPQVQAFVRSDKPKLFRGLQIKYVRGSDPVLKLLDDNGNIAEELSILKWNTDSVEEFLSEKLQRV.

Positions Met1–Ala28 are cleaved as a signal peptide. A non-standard amino acid (selenocysteine) is located at residue Sec93.

It belongs to the selenoprotein M/F family. Forms a tight complex with UGGT1/UGCGL1. Interacts with UGGT2/UGCGL2. Interacts with RDH11.

Its subcellular location is the endoplasmic reticulum lumen. Functionally, may be involved in redox reactions associated with the formation of disulfide bonds. May contribute to the quality control of protein folding in the endoplasmic reticulum. May regulate protein folding by enhancing the catalytic activity of UGGT1/UGCGL1 and UGGT2/UGCGL2. The protein is Selenoprotein F of Sus scrofa (Pig).